Here is a 330-residue protein sequence, read N- to C-terminus: DNA-directed RNA polymerase subunit alpha (330 aa).

The interval Met1–Ser225 is alpha N-terminal domain (alpha-NTD). An alpha C-terminal domain (alpha-CTD) region spans residues Val237–Asp330.

Belongs to the RNA polymerase alpha chain family. Homodimer. The RNAP catalytic core consists of 2 alpha, 1 beta, 1 beta' and 1 omega subunit. When a sigma factor is associated with the core the holoenzyme is formed, which can initiate transcription.

The enzyme catalyses RNA(n) + a ribonucleoside 5'-triphosphate = RNA(n+1) + diphosphate. Functionally, DNA-dependent RNA polymerase catalyzes the transcription of DNA into RNA using the four ribonucleoside triphosphates as substrates. This is DNA-directed RNA polymerase subunit alpha from Dehalococcoides mccartyi (strain CBDB1).